The sequence spans 123 residues: Ribosome-binding factor A (123 aa).

It belongs to the RbfA family. In terms of assembly, monomer. Binds 30S ribosomal subunits, but not 50S ribosomal subunits or 70S ribosomes.

It localises to the cytoplasm. One of several proteins that assist in the late maturation steps of the functional core of the 30S ribosomal subunit. Associates with free 30S ribosomal subunits (but not with 30S subunits that are part of 70S ribosomes or polysomes). Required for efficient processing of 16S rRNA. May interact with the 5'-terminal helix region of 16S rRNA. The sequence is that of Ribosome-binding factor A from Neisseria gonorrhoeae (strain NCCP11945).